The primary structure comprises 308 residues: Cytochrome b (308 aa).

4 helical membrane-spanning segments follow: residues 1 to 21 (FGSL…LLAM), 45 to 66 (WLIR…YLHI), 81 to 101 (WNIG…GYVL), and 146 to 166 (FFAF…VHLT). Residues His-51 and His-65 each coordinate heme b. Residues His-150 and His-164 each coordinate heme b. His-169 contributes to the a ubiquinone binding site. 3 helical membrane passes run 194–214 (IKDL…ALFS), 256–276 (LGGV…PLLH), and 288–308 (LSQI…WVGS).

Belongs to the cytochrome b family. In terms of assembly, the cytochrome bc1 complex contains 11 subunits: 3 respiratory subunits (MT-CYB, CYC1 and UQCRFS1), 2 core proteins (UQCRC1 and UQCRC2) and 6 low-molecular weight proteins (UQCRH/QCR6, UQCRB/QCR7, UQCRQ/QCR8, UQCR10/QCR9, UQCR11/QCR10 and a cleavage product of UQCRFS1). This cytochrome bc1 complex then forms a dimer. Requires heme b as cofactor.

The protein localises to the mitochondrion inner membrane. Functionally, component of the ubiquinol-cytochrome c reductase complex (complex III or cytochrome b-c1 complex) that is part of the mitochondrial respiratory chain. The b-c1 complex mediates electron transfer from ubiquinol to cytochrome c. Contributes to the generation of a proton gradient across the mitochondrial membrane that is then used for ATP synthesis. The protein is Cytochrome b (MT-CYB) of Corvus corax (Common raven).